We begin with the raw amino-acid sequence, 180 residues long: Large ribosomal subunit protein uL5 (180 aa).

This sequence belongs to the universal ribosomal protein uL5 family. In terms of assembly, part of the 50S ribosomal subunit; part of the 5S rRNA/L5/L18/L25 subcomplex. Contacts the 5S rRNA and the P site tRNA. Forms a bridge to the 30S subunit in the 70S ribosome.

This is one of the proteins that bind and probably mediate the attachment of the 5S RNA into the large ribosomal subunit, where it forms part of the central protuberance. In the 70S ribosome it contacts protein S13 of the 30S subunit (bridge B1b), connecting the 2 subunits; this bridge is implicated in subunit movement. Contacts the P site tRNA; the 5S rRNA and some of its associated proteins might help stabilize positioning of ribosome-bound tRNAs. The polypeptide is Large ribosomal subunit protein uL5 (Mycoplasma pneumoniae (strain ATCC 29342 / M129 / Subtype 1) (Mycoplasmoides pneumoniae)).